A 372-amino-acid polypeptide reads, in one-letter code: Queuine tRNA-ribosyltransferase (372 aa).

Asp-92 acts as the Proton acceptor in catalysis. Substrate-binding positions include 92 to 96 (DSGGY), Asp-146, Gln-188, and Gly-215. The RNA binding stretch occupies residues 246 to 252 (GIGSLRE). The Nucleophile role is filled by Asp-265. Positions 270–274 (TRLGR) are RNA binding; important for wobble base 34 recognition. Positions 303, 305, 308, and 334 each coordinate Zn(2+).

This sequence belongs to the queuine tRNA-ribosyltransferase family. As to quaternary structure, homodimer. Within each dimer, one monomer is responsible for RNA recognition and catalysis, while the other monomer binds to the replacement base PreQ1. The cofactor is Zn(2+).

It catalyses the reaction 7-aminomethyl-7-carbaguanine + guanosine(34) in tRNA = 7-aminomethyl-7-carbaguanosine(34) in tRNA + guanine. The protein operates within tRNA modification; tRNA-queuosine biosynthesis. In terms of biological role, catalyzes the base-exchange of a guanine (G) residue with the queuine precursor 7-aminomethyl-7-deazaguanine (PreQ1) at position 34 (anticodon wobble position) in tRNAs with GU(N) anticodons (tRNA-Asp, -Asn, -His and -Tyr). Catalysis occurs through a double-displacement mechanism. The nucleophile active site attacks the C1' of nucleotide 34 to detach the guanine base from the RNA, forming a covalent enzyme-RNA intermediate. The proton acceptor active site deprotonates the incoming PreQ1, allowing a nucleophilic attack on the C1' of the ribose to form the product. After dissociation, two additional enzymatic reactions on the tRNA convert PreQ1 to queuine (Q), resulting in the hypermodified nucleoside queuosine (7-(((4,5-cis-dihydroxy-2-cyclopenten-1-yl)amino)methyl)-7-deazaguanosine). This chain is Queuine tRNA-ribosyltransferase, found in Prochlorococcus marinus subsp. pastoris (strain CCMP1986 / NIES-2087 / MED4).